Consider the following 171-residue polypeptide: Peptide methionine sulfoxide reductase MsrA (171 aa).

The active site involves cysteine 13.

It belongs to the MsrA Met sulfoxide reductase family.

The catalysed reaction is L-methionyl-[protein] + [thioredoxin]-disulfide + H2O = L-methionyl-(S)-S-oxide-[protein] + [thioredoxin]-dithiol. The enzyme catalyses [thioredoxin]-disulfide + L-methionine + H2O = L-methionine (S)-S-oxide + [thioredoxin]-dithiol. Has an important function as a repair enzyme for proteins that have been inactivated by oxidation. Catalyzes the reversible oxidation-reduction of methionine sulfoxide in proteins to methionine. This is Peptide methionine sulfoxide reductase MsrA from Mycobacterium sp. (strain JLS).